A 1309-amino-acid chain; its full sequence is Disease resistance protein RPP2A (1309 aa).

The region spanning 9–173 (RRYDVFPSFS…MVADDVSKKL (165 aa)) is the TIR 1 domain. E84 is an active-site residue. The 232-residue stretch at 187 to 418 (EAHLEAMSSI…FKKTLRNYLP (232 aa)) folds into the NB-ARC 1 domain. Residues 488-585 (PNRRHSNDDW…KECILVFSCH (98 aa)) enclose the ALOG domain. The TIR 2 domain maps to 574-737 (REKECILVFS…EVVRNASLRL (164 aa)). In terms of domain architecture, NB-ARC 2 spans 755–987 (SQSTDVEIMG…IFLDLACFFR (233 aa)). The stretch at 1114-1141 (LPHGLDTLPDELSLLHWENYPLVYLPQK) forms a coiled coil. LRR repeat units lie at residues 1145–1167 (VNLV…KKNL), 1168–1195 (EKLK…NLEH), 1214–1237 (CGKL…MVDL), 1238–1258 (TTLK…QDFA), 1259–1283 (PNLE…NLTE), and 1285–1307 (VTLD…EIIR).

It belongs to the disease resistance TIR-NB-LRR family.

It carries out the reaction NAD(+) + H2O = ADP-D-ribose + nicotinamide + H(+). In terms of biological role, disease resistance protein that cooperates with RPP2B to confer resistance to Hyaloperonospora parasitica isolate Cala2. The polypeptide is Disease resistance protein RPP2A (Arabidopsis thaliana (Mouse-ear cress)).